The primary structure comprises 211 residues: MLTIALSKGRILDDTLPLLAEAGIVPTENPDKSRKLIIPTTQADVRLLIVRATDVPTYVEHGAADLGVAGKDVLMEYTGQGLYEPLDLQIAKCRLMTAGAIGAVEPKGRLRVATKFVNVAKRYYAEQGRQVDIIKLYGSMELAPLIGLADKIIDVVDTGNTLRANGLEPQELIATISSRLVVNKASMKMQHARIQALIDTLRKAVESRHRS.

Belongs to the ATP phosphoribosyltransferase family. Short subfamily. Heteromultimer composed of HisG and HisZ subunits.

It localises to the cytoplasm. The enzyme catalyses 1-(5-phospho-beta-D-ribosyl)-ATP + diphosphate = 5-phospho-alpha-D-ribose 1-diphosphate + ATP. It participates in amino-acid biosynthesis; L-histidine biosynthesis; L-histidine from 5-phospho-alpha-D-ribose 1-diphosphate: step 1/9. Functionally, catalyzes the condensation of ATP and 5-phosphoribose 1-diphosphate to form N'-(5'-phosphoribosyl)-ATP (PR-ATP). Has a crucial role in the pathway because the rate of histidine biosynthesis seems to be controlled primarily by regulation of HisG enzymatic activity. The polypeptide is ATP phosphoribosyltransferase (Pseudomonas syringae pv. syringae (strain B728a)).